An 88-amino-acid chain; its full sequence is Putative membrane protein insertion efficiency factor (88 aa).

The tract at residues 68–88 (VPPPNSDTRARGEADARSHRL) is disordered. Residues 75 to 88 (TRARGEADARSHRL) show a composition bias toward basic and acidic residues.

It belongs to the UPF0161 family.

It is found in the cell inner membrane. In terms of biological role, could be involved in insertion of integral membrane proteins into the membrane. The protein is Putative membrane protein insertion efficiency factor of Burkholderia ambifaria (strain MC40-6).